A 132-amino-acid chain; its full sequence is Small ribosomal subunit protein uS11 (132 aa).

The protein belongs to the universal ribosomal protein uS11 family. In terms of assembly, part of the 30S ribosomal subunit. Interacts with proteins S7 and S18. Binds to IF-3.

Its function is as follows. Located on the platform of the 30S subunit, it bridges several disparate RNA helices of the 16S rRNA. Forms part of the Shine-Dalgarno cleft in the 70S ribosome. This chain is Small ribosomal subunit protein uS11, found in Oenococcus oeni (strain ATCC BAA-331 / PSU-1).